A 357-amino-acid polypeptide reads, in one-letter code: Scopoletin 8-hydroxylase (357 aa).

Residues 206 to 307 enclose the Fe2OG dioxygenase domain; the sequence is MGTKMVNMNY…RVSVPIFTAP (102 aa). Y216 is a 2-oxoglutarate binding site. Fe cation is bound by residues H231, D233, and H288. Residues R298 and S300 each contribute to the 2-oxoglutarate site.

Belongs to the iron/ascorbate-dependent oxidoreductase family. The cofactor is L-ascorbate. Requires Fe(2+) as cofactor. Expressed in both primary and lateral roots under iron-deficient conditions, except in apical root zones, and mostly in the root epidermal layer.

It catalyses the reaction scopoletin + 2-oxoglutarate + O2 = fraxetin + succinate + CO2. It participates in phenylpropanoid metabolism. In terms of biological role, involved in the pathway of sideretin biosynthesis from feruloyl CoA, a redox-active catecholic metabolite exuded by roots in response to iron deficiency in order to facilitate the uptake of iron; this pathway consists in the successive conversion from feruloyl CoA to scopoletin, from scopoletin to fraxetin and from fraxetin to sideretin. Catalyzes the biosynthesis of fraxetin via scopoletin hydroxylation. This Arabidopsis thaliana (Mouse-ear cress) protein is Scopoletin 8-hydroxylase.